The following is an 84-amino-acid chain: MKRMILFISCLLLIDIVVGGREGYPADSKGCKITCFLTAAGYCNTECTLKKGSSGYCAWPACYCYGLPDSVKIWTSETNKCGKK.

A signal peptide spans 1–19; the sequence is MKRMILFISCLLLIDIVVG. The region spanning 21–82 is the LCN-type CS-alpha/beta domain; it reads REGYPADSKG…IWTSETNKCG (62 aa). 4 disulfide bridges follow: Cys-31/Cys-81, Cys-35/Cys-57, Cys-43/Cys-62, and Cys-47/Cys-64. The residue at position 81 (Cys-81) is a Cysteine amide. A propeptide spanning residues 82–84 is cleaved from the precursor; that stretch reads GKK.

Belongs to the long (4 C-C) scorpion toxin superfamily. Sodium channel inhibitor family. Alpha subfamily. Expressed by the venom gland.

The protein resides in the secreted. Its function is as follows. Not toxic. Induces an immune response similar to that induced by whole venom. Induces a dose dependent release of the neurotransmitters glutamic acid and gamma aminobutyric acid from rat brain synaptosomes. Thus, polyclonal antibodies raised against this protein can neutralize the effects of the venom. This Tityus serrulatus (Brazilian scorpion) protein is Toxin Ts4.